Reading from the N-terminus, the 183-residue chain is Efficient mitochondria targeting-associated protein 19 (183 aa).

The Cytoplasmic portion of the chain corresponds to 1 to 25 (MKVVSLRRIYSSEIYKLPTTRLHMD). Positions 24–156 (MDTLYYYYFV…PYLAIPLWMA (133 aa)) constitute an EXPERA domain. Residues 26–46 (TLYYYYFVSHLAAALFVDLPI) traverse the membrane as a helical segment. The Lumenal portion of the chain corresponds to 47-81 (TEWLGGSLSCLSGLRRFYLSTYEDPILLIPAPWKT). Residues 82-102 (ALFSSELFFQVPFFIWVSLRL) form a helical membrane-spanning segment. Residues 103-110 (RKKARDPV) are Cytoplasmic-facing. A helical membrane pass occupies residues 111 to 131 (LWVAILIYGVHAFTTTWCCMF). At 132–138 (ELFAEKK) the chain is on the lumenal side. Residues 139 to 159 (WMIMSFYFPYLAIPLWMAIDM) traverse the membrane as a helical segment. The Cytoplasmic portion of the chain corresponds to 160 to 183 (GGRLVKSCHAAKSGPSSTITSKSD).

Belongs to the TMEM97/sigma-2 receptor family.

The protein resides in the endoplasmic reticulum membrane. Functionally, part of an import route for newly synthesized mitochondrial proteins termed the ER-SURF pathway (ER surface-mediated protein targeting), which retrieves mitochondrial precursor proteins from the ER surface and reroutes them to mitochondria for efficient mitochondrial import. Acts as a quality control factor in the ER, promoting the proteolytic degradation of nonproductive and extramitochondrial precursor proteins in the ER membrane thus removing them from the ER surface. In Schizosaccharomyces pombe (strain 972 / ATCC 24843) (Fission yeast), this protein is Efficient mitochondria targeting-associated protein 19 (ema19).